Here is a 350-residue protein sequence, read N- to C-terminus: Variable large protein 4 (350 aa).

An N-terminal signal peptide occupies residues 1–18 (MRRRISAIIMTLFMVLVS). Residue Cys19 is the site of N-palmitoyl cysteine attachment. The S-diacylglycerol cysteine moiety is linked to residue Cys19.

The protein belongs to the variable large protein (Vlp) family. Delta subfamily.

It is found in the cell outer membrane. In terms of biological role, the Vlp and Vsp proteins are antigenically distinct proteins, only one vlp or vsp gene is transcriptionally active at any one time. Switching between these genes is a mechanism of host immune response evasion. This is Variable large protein 4 from Borrelia hermsii.